A 556-amino-acid chain; its full sequence is Arginine--tRNA ligase (556 aa).

Residues 133–143 carry the 'HIGH' region motif; sequence ANPTGPIHIGH.

The protein belongs to the class-I aminoacyl-tRNA synthetase family. In terms of assembly, monomer.

The protein resides in the cytoplasm. The catalysed reaction is tRNA(Arg) + L-arginine + ATP = L-arginyl-tRNA(Arg) + AMP + diphosphate. This is Arginine--tRNA ligase from Dehalococcoides mccartyi (strain CBDB1).